The following is a 570-amino-acid chain: Sulfite reductase [NADPH] hemoprotein beta-component (570 aa).

Residues Cys-434, Cys-440, Cys-479, and Cys-483 each contribute to the [4Fe-4S] cluster site. Cys-483 lines the siroheme pocket.

Belongs to the nitrite and sulfite reductase 4Fe-4S domain family. As to quaternary structure, alpha(8)-beta(8). The alpha component is a flavoprotein, the beta component is a hemoprotein. Requires siroheme as cofactor. It depends on [4Fe-4S] cluster as a cofactor.

It catalyses the reaction hydrogen sulfide + 3 NADP(+) + 3 H2O = sulfite + 3 NADPH + 4 H(+). The protein operates within sulfur metabolism; hydrogen sulfide biosynthesis; hydrogen sulfide from sulfite (NADPH route): step 1/1. Functionally, component of the sulfite reductase complex that catalyzes the 6-electron reduction of sulfite to sulfide. This is one of several activities required for the biosynthesis of L-cysteine from sulfate. The sequence is that of Sulfite reductase [NADPH] hemoprotein beta-component from Salmonella dublin (strain CT_02021853).